The following is a 466-amino-acid chain: Cysteine--tRNA ligase (466 aa).

Cysteine 33 is a Zn(2+) binding site. Residues 35-45 (PTVYDYAHIGN) carry the 'HIGH' region motif. The Zn(2+) site is built by cysteine 221, histidine 246, and glutamate 250. The short motif at 279 to 283 (KMSKS) is the 'KMSKS' region element. Lysine 282 is a binding site for ATP.

This sequence belongs to the class-I aminoacyl-tRNA synthetase family. Monomer. Zn(2+) is required as a cofactor.

It localises to the cytoplasm. It carries out the reaction tRNA(Cys) + L-cysteine + ATP = L-cysteinyl-tRNA(Cys) + AMP + diphosphate. This Rhizobium meliloti (strain 1021) (Ensifer meliloti) protein is Cysteine--tRNA ligase.